A 284-amino-acid polypeptide reads, in one-letter code: tRNA pseudouridine synthase A (284 aa).

Aspartate 52 (nucleophile) is an active-site residue. Position 149 (tyrosine 149) interacts with substrate.

The protein belongs to the tRNA pseudouridine synthase TruA family. In terms of assembly, homodimer.

The catalysed reaction is uridine(38/39/40) in tRNA = pseudouridine(38/39/40) in tRNA. Functionally, formation of pseudouridine at positions 38, 39 and 40 in the anticodon stem and loop of transfer RNAs. This chain is tRNA pseudouridine synthase A, found in Orientia tsutsugamushi (strain Boryong) (Rickettsia tsutsugamushi).